A 102-amino-acid polypeptide reads, in one-letter code: Large ribosomal subunit protein uL24 (102 aa).

Belongs to the universal ribosomal protein uL24 family. As to quaternary structure, part of the 50S ribosomal subunit.

One of two assembly initiator proteins, it binds directly to the 5'-end of the 23S rRNA, where it nucleates assembly of the 50S subunit. Functionally, one of the proteins that surrounds the polypeptide exit tunnel on the outside of the subunit. The protein is Large ribosomal subunit protein uL24 of Burkholderia mallei (strain NCTC 10229).